Consider the following 37-residue polypeptide: NADH dehydrogenase [ubiquinone] 1 alpha subcomplex subunit 5 (37 aa).

It belongs to the complex I NDUFA5 subunit family. Complex I is composed of about 45 different subunits.

Its subcellular location is the mitochondrion inner membrane. Its function is as follows. Accessory subunit of the mitochondrial membrane respiratory chain NADH dehydrogenase (Complex I), that is believed not to be involved in catalysis. Complex I functions in the transfer of electrons from NADH to the respiratory chain. The immediate electron acceptor for the enzyme is believed to be ubiquinone. This chain is NADH dehydrogenase [ubiquinone] 1 alpha subcomplex subunit 5, found in Solanum tuberosum (Potato).